Here is a 96-residue protein sequence, read N- to C-terminus: Acetolactate synthase isozyme 1 small subunit (96 aa).

Residues 10-83 form the ACT domain; that stretch reads ILELTVRNHP…DVVKVQRNQS (74 aa).

The protein belongs to the acetolactate synthase small subunit family. Dimer of large and small chains.

The catalysed reaction is 2 pyruvate + H(+) = (2S)-2-acetolactate + CO2. It functions in the pathway amino-acid biosynthesis; L-isoleucine biosynthesis; L-isoleucine from 2-oxobutanoate: step 1/4. It participates in amino-acid biosynthesis; L-valine biosynthesis; L-valine from pyruvate: step 1/4. The sequence is that of Acetolactate synthase isozyme 1 small subunit (ilvN) from Escherichia coli O157:H7.